We begin with the raw amino-acid sequence, 381 residues long: Deoxyguanosinetriphosphate triphosphohydrolase-like protein (381 aa).

The HD domain occupies 76-203; it reads RMTHTLEVAG…ADLSDEIAYT (128 aa).

It belongs to the dGTPase family. Type 2 subfamily.

This chain is Deoxyguanosinetriphosphate triphosphohydrolase-like protein, found in Leptospira interrogans serogroup Icterohaemorrhagiae serovar copenhageni (strain Fiocruz L1-130).